Reading from the N-terminus, the 273-residue chain is Tryptophan synthase alpha chain (273 aa).

Active-site proton acceptor residues include glutamate 49 and aspartate 60.

This sequence belongs to the TrpA family. Tetramer of two alpha and two beta chains.

The enzyme catalyses (1S,2R)-1-C-(indol-3-yl)glycerol 3-phosphate + L-serine = D-glyceraldehyde 3-phosphate + L-tryptophan + H2O. It participates in amino-acid biosynthesis; L-tryptophan biosynthesis; L-tryptophan from chorismate: step 5/5. In terms of biological role, the alpha subunit is responsible for the aldol cleavage of indoleglycerol phosphate to indole and glyceraldehyde 3-phosphate. The chain is Tryptophan synthase alpha chain from Halorhodospira halophila (strain DSM 244 / SL1) (Ectothiorhodospira halophila (strain DSM 244 / SL1)).